The chain runs to 120 residues: Large ribosomal subunit protein eL8 (120 aa).

Belongs to the eukaryotic ribosomal protein eL8 family. As to quaternary structure, part of the 50S ribosomal subunit. Probably part of the RNase P complex.

The protein localises to the cytoplasm. In terms of biological role, multifunctional RNA-binding protein that recognizes the K-turn motif in ribosomal RNA, the RNA component of RNase P, box H/ACA, box C/D and box C'/D' sRNAs. The chain is Large ribosomal subunit protein eL8 from Halorubrum lacusprofundi (strain ATCC 49239 / DSM 5036 / JCM 8891 / ACAM 34).